The sequence spans 190 residues: dTTP/UTP pyrophosphatase (190 aa).

Catalysis depends on D70, which acts as the Proton acceptor.

This sequence belongs to the Maf family. YhdE subfamily. A divalent metal cation serves as cofactor.

It localises to the cytoplasm. The enzyme catalyses dTTP + H2O = dTMP + diphosphate + H(+). The catalysed reaction is UTP + H2O = UMP + diphosphate + H(+). Functionally, nucleoside triphosphate pyrophosphatase that hydrolyzes dTTP and UTP. May have a dual role in cell division arrest and in preventing the incorporation of modified nucleotides into cellular nucleic acids. The polypeptide is dTTP/UTP pyrophosphatase (Paramagnetospirillum magneticum (strain ATCC 700264 / AMB-1) (Magnetospirillum magneticum)).